We begin with the raw amino-acid sequence, 599 residues long: Protein linkin (599 aa).

A signal peptide spans 1-19 (MKKILPIIWLINLVSGSLS). Residues 20-553 (LEKKAPDLLG…SRLYVTPSAL (534 aa)) lie on the Extracellular side of the membrane. 5 N-linked (GlcNAc...) asparagine glycosylation sites follow: Asn-50, Asn-117, Asn-163, Asn-361, and Asn-378. A helical transmembrane segment spans residues 554-574 (IVQSLAVIALVCCMLLMVVVF). At 575–599 (LHYREKKEDRYERQQQSHRFHFDAM) the chain is on the cytoplasmic side.

It belongs to the TIP family. In terms of tissue distribution, expressed in all somatic gonadal cells including distal tip cells, anchor cell, uterine precursor cells and spermatheca precursor cells of the hermaphrodite. Also expressed in the pharynx, pharyngeal-intestinal valve, intestine, excretory cell and canal, seam cells, a subset of hypodermal cells, vulval precursor cells of the hermaphrodite and hook precursor cells in the male.

The protein localises to the apical cell membrane. Its subcellular location is the lateral cell membrane. Probable cell adhesion protein involved in gonadal cell migration. The chain is Protein linkin from Caenorhabditis elegans.